A 485-amino-acid chain; its full sequence is Ribulose bisphosphate carboxylase large chain (485 aa).

The propeptide occupies 1–2 (MS). N-acetylproline is present on P3. K14 is subject to N6,N6,N6-trimethyllysine. Substrate is bound by residues N123 and T173. K175 (proton acceptor) is an active-site residue. K177 is a substrate binding site. K201, D203, and E204 together coordinate Mg(2+). An N6-carboxylysine modification is found at K201. H294 serves as the catalytic Proton acceptor. R295, H327, and S379 together coordinate substrate.

Belongs to the RuBisCO large chain family. Type I subfamily. Heterohexadecamer of 8 large chains and 8 small chains; disulfide-linked. The disulfide link is formed within the large subunit homodimers. Mg(2+) is required as a cofactor. In terms of processing, the disulfide bond which can form in the large chain dimeric partners within the hexadecamer appears to be associated with oxidative stress and protein turnover.

It localises to the plastid. The protein resides in the chloroplast. It carries out the reaction 2 (2R)-3-phosphoglycerate + 2 H(+) = D-ribulose 1,5-bisphosphate + CO2 + H2O. The catalysed reaction is D-ribulose 1,5-bisphosphate + O2 = 2-phosphoglycolate + (2R)-3-phosphoglycerate + 2 H(+). RuBisCO catalyzes two reactions: the carboxylation of D-ribulose 1,5-bisphosphate, the primary event in carbon dioxide fixation, as well as the oxidative fragmentation of the pentose substrate in the photorespiration process. Both reactions occur simultaneously and in competition at the same active site. The protein is Ribulose bisphosphate carboxylase large chain of Flaveria pringlei.